The following is a 361-amino-acid chain: MTQIFNFSAGPAMLPVEVLRRAEQELCNWNGLGTSVMEISHRSKEFMQVAAESEQNLRDLLKIPSNYKVLFCHGGARAQFAAVPLNLLGERSTADYIDGGYWAHSAVNEAEKYCTPNVIDVKTRVDGLRGVKPMREWQLSDDAAFVHYCPNETIDGIAIEEEPDFGDKIVVADYSSSILSRRIDVSRYGVIYAGAQKNIGPAGLTLVIVRDDLLGKARRELPSILDYQILADNDSMFNTPPTFAWYLSGMVFKWLKEHGGLAEMEKRNQEKADLLYSAIDGNDFYRNDVAVANRSRMNVPFLLADAALDKVFLEESVAAGLHALKGHRVVGGMRASIYNAMPLEGVKALTEFMADFARRHG.

Residue Arg-42 participates in L-glutamate binding. Pyridoxal 5'-phosphate is bound by residues Ala-76–Arg-77, Trp-102, Thr-153, Asp-173, and Gln-196. Lys-197 is subject to N6-(pyridoxal phosphate)lysine. Asn-238 to Thr-239 provides a ligand contact to pyridoxal 5'-phosphate.

This sequence belongs to the class-V pyridoxal-phosphate-dependent aminotransferase family. SerC subfamily. As to quaternary structure, homodimer. It depends on pyridoxal 5'-phosphate as a cofactor.

The protein resides in the cytoplasm. The enzyme catalyses O-phospho-L-serine + 2-oxoglutarate = 3-phosphooxypyruvate + L-glutamate. It carries out the reaction 4-(phosphooxy)-L-threonine + 2-oxoglutarate = (R)-3-hydroxy-2-oxo-4-phosphooxybutanoate + L-glutamate. Its pathway is amino-acid biosynthesis; L-serine biosynthesis; L-serine from 3-phospho-D-glycerate: step 2/3. It functions in the pathway cofactor biosynthesis; pyridoxine 5'-phosphate biosynthesis; pyridoxine 5'-phosphate from D-erythrose 4-phosphate: step 3/5. Its function is as follows. Catalyzes the reversible conversion of 3-phosphohydroxypyruvate to phosphoserine and of 3-hydroxy-2-oxo-4-phosphonooxybutanoate to phosphohydroxythreonine. The protein is Phosphoserine aminotransferase of Pectobacterium carotovorum subsp. carotovorum (strain PC1).